We begin with the raw amino-acid sequence, 101 residues long: Enhancer of yellow 2 transcription factor (101 aa).

Belongs to the ENY2 family. As to quaternary structure, component of the nuclear pore complex (NPC)-associated AMEX complex (anchoring and mRNA export complex), composed of at least e(y)2 and xmas-2. Component of the SAGA transcription coactivator-HAT complexes, at least composed of Ada2b, e(y)2, Pcaf/Gcn5, Taf10 and Nipped-A/Trrap. Within the SAGA complex, e(y)2, Sgf11, and not/nonstop form an additional subcomplex of SAGA called the DUB module (deubiquitination module). Component of the THO complex, composed of at least e(y)2, HPR1, THO2, THOC5, THOC6 and THOC7. Interacts with e(y)1. Interacts with su(Hw) (via zinc fingers). Interacts with xmas-2; required for localization to the nuclear periphery. Interacts with the nuclear pore complex (NPC).

It localises to the nucleus. The protein resides in the nucleoplasm. Its subcellular location is the cytoplasm. Involved in mRNA export coupled transcription activation by association with both the AMEX and the SAGA complexes. The SAGA complex is a multiprotein complex that activates transcription by remodeling chromatin and mediating histone acetylation and deubiquitination. Within the SAGA complex, participates in a subcomplex that specifically deubiquitinates histone H2B. The SAGA complex is recruited to specific gene promoters by activators, where it is required for transcription. Required for nuclear receptor-mediated transactivation. Involved in transcription elongation by recruiting the THO complex onto nascent mRNA. The AMEX complex functions in docking export-competent ribonucleoprotein particles (mRNPs) to the nuclear entrance of the nuclear pore complex (nuclear basket). AMEX participates in mRNA export and accurate chromatin positioning in the nucleus by tethering genes to the nuclear periphery. The polypeptide is Enhancer of yellow 2 transcription factor (Drosophila erecta (Fruit fly)).